Here is a 236-residue protein sequence, read N- to C-terminus: Chorionic somatomammotropin hormone (236 aa).

The first 36 residues, M1 to G36, serve as a signal peptide directing secretion. 3 cysteine pairs are disulfide-bonded: C44–C51, C97–C212, and C229–C234.

Belongs to the somatotropin/prolactin family.

The protein resides in the secreted. This Ovis aries (Sheep) protein is Chorionic somatomammotropin hormone (CSH).